The primary structure comprises 429 residues: Aspartate--tRNA(Asp/Asn) ligase (429 aa).

Residue E167 participates in L-aspartate binding. The aspartate stretch occupies residues 189–192 (QLYK). R210 is a binding site for L-aspartate. ATP is bound by residues 210–212 (RAE) and E352. Mg(2+)-binding residues include E352 and S355. L-aspartate is bound by residues S355 and R359. ATP is bound at residue 400-403 (GLAR).

It belongs to the class-II aminoacyl-tRNA synthetase family. Type 2 subfamily. As to quaternary structure, homodimer. The cofactor is Mg(2+).

The protein resides in the cytoplasm. The catalysed reaction is tRNA(Asx) + L-aspartate + ATP = L-aspartyl-tRNA(Asx) + AMP + diphosphate. Aspartyl-tRNA synthetase with relaxed tRNA specificity since it is able to aspartylate not only its cognate tRNA(Asp) but also tRNA(Asn). Reaction proceeds in two steps: L-aspartate is first activated by ATP to form Asp-AMP and then transferred to the acceptor end of tRNA(Asp/Asn). The sequence is that of Aspartate--tRNA(Asp/Asn) ligase from Saccharolobus solfataricus (strain ATCC 35092 / DSM 1617 / JCM 11322 / P2) (Sulfolobus solfataricus).